The sequence spans 346 residues: tRNA N6-adenosine threonylcarbamoyltransferase (346 aa).

Residues His-110 and His-114 each contribute to the Fe cation site. Residues 132 to 136 (LLSGG), Asp-165, Gly-178, and Asn-274 each bind substrate. A Fe cation-binding site is contributed by Asp-298.

It belongs to the KAE1 / TsaD family. It depends on Fe(2+) as a cofactor.

The protein localises to the cytoplasm. The catalysed reaction is L-threonylcarbamoyladenylate + adenosine(37) in tRNA = N(6)-L-threonylcarbamoyladenosine(37) in tRNA + AMP + H(+). Required for the formation of a threonylcarbamoyl group on adenosine at position 37 (t(6)A37) in tRNAs that read codons beginning with adenine. Is involved in the transfer of the threonylcarbamoyl moiety of threonylcarbamoyl-AMP (TC-AMP) to the N6 group of A37, together with TsaE and TsaB. TsaD likely plays a direct catalytic role in this reaction. In Borreliella afzelii (strain PKo) (Borrelia afzelii), this protein is tRNA N6-adenosine threonylcarbamoyltransferase.